The primary structure comprises 501 residues: ATP synthase subunit alpha (501 aa).

ATP is bound at residue 169–176 (GDRQTGKT).

This sequence belongs to the ATPase alpha/beta chains family. In terms of assembly, F-type ATPases have 2 components, CF(1) - the catalytic core - and CF(0) - the membrane proton channel. CF(1) has five subunits: alpha(3), beta(3), gamma(1), delta(1), epsilon(1). CF(0) has three main subunits: a(1), b(2) and c(9-12). The alpha and beta chains form an alternating ring which encloses part of the gamma chain. CF(1) is attached to CF(0) by a central stalk formed by the gamma and epsilon chains, while a peripheral stalk is formed by the delta and b chains.

The protein localises to the cell inner membrane. It carries out the reaction ATP + H2O + 4 H(+)(in) = ADP + phosphate + 5 H(+)(out). Its function is as follows. Produces ATP from ADP in the presence of a proton gradient across the membrane. The alpha chain is a regulatory subunit. The chain is ATP synthase subunit alpha from Campylobacter jejuni subsp. jejuni serotype O:23/36 (strain 81-176).